The following is a 443-amino-acid chain: Ribulose bisphosphate carboxylase large chain (443 aa).

Residues N89 and T139 each contribute to the substrate site. K141 serves as the catalytic Proton acceptor. K143 lines the substrate pocket. Residues K167, D169, and E170 each contribute to the Mg(2+) site. K167 carries the post-translational modification N6-carboxylysine. The active-site Proton acceptor is H260. R261, H293, and S345 together coordinate substrate.

This sequence belongs to the RuBisCO large chain family. Type I subfamily. In terms of assembly, heterohexadecamer of 8 large chains and 8 small chains; disulfide-linked. The disulfide link is formed within the large subunit homodimers. It depends on Mg(2+) as a cofactor. The disulfide bond which can form in the large chain dimeric partners within the hexadecamer appears to be associated with oxidative stress and protein turnover.

It localises to the plastid. Its subcellular location is the chloroplast. It catalyses the reaction 2 (2R)-3-phosphoglycerate + 2 H(+) = D-ribulose 1,5-bisphosphate + CO2 + H2O. The enzyme catalyses D-ribulose 1,5-bisphosphate + O2 = 2-phosphoglycolate + (2R)-3-phosphoglycerate + 2 H(+). Its function is as follows. RuBisCO catalyzes two reactions: the carboxylation of D-ribulose 1,5-bisphosphate, the primary event in carbon dioxide fixation, as well as the oxidative fragmentation of the pentose substrate in the photorespiration process. Both reactions occur simultaneously and in competition at the same active site. The chain is Ribulose bisphosphate carboxylase large chain from Callitriche heterophylla (Large water-starwort).